The following is a 934-amino-acid chain: Protein translocase subunit SecA (934 aa).

Residues Gln-90, 108–112 (GEGKT), and Asp-509 each bind ATP. Positions 535–565 (PEEDHTPPVPLQRSAPGGFSDAAAPSLPRSG) are disordered.

The protein belongs to the SecA family. As to quaternary structure, monomer and homodimer. Part of the essential Sec protein translocation apparatus which comprises SecA, SecYEG and auxiliary proteins SecDF. Other proteins may also be involved.

Its subcellular location is the cell inner membrane. It is found in the cellular thylakoid membrane. The protein resides in the cytoplasm. The catalysed reaction is ATP + H2O + cellular proteinSide 1 = ADP + phosphate + cellular proteinSide 2.. Functionally, part of the Sec protein translocase complex. Interacts with the SecYEG preprotein conducting channel. Has a central role in coupling the hydrolysis of ATP to the transfer of proteins into and across the cell membrane, serving as an ATP-driven molecular motor driving the stepwise translocation of polypeptide chains across the membrane. Probably participates in protein translocation into and across both the cytoplasmic and thylakoid membranes in cyanobacterial cells. The sequence is that of Protein translocase subunit SecA from Synechococcus sp. (strain CC9605).